A 519-amino-acid chain; its full sequence is Protein amnionless (519 aa).

Positions M1–A19 are cleaved as a signal peptide. Over A20–M430 the chain is Extracellular. N-linked (GlcNAc...) asparagine glycans are attached at residues N35 and N39. 6 disulfides stabilise this stretch: C43-C152, C193-C267, C259-C265, C277-C303, C288-C304, and C293-C307. Positions S67–A143 are interaction with CUBN. The VWFC domain maps to P256–G308. A helical membrane pass occupies residues G431–L451. At R452–A519 the chain is on the cytoplasmic side.

Interacts (via extracellular region) with CUBN/cubilin, giving rise to a huge complex containing one AMN chain and three CUBN chains. In terms of processing, N-glycosylated. Post-translationally, a soluble form arises by proteolytic removal of the membrane anchor. In terms of tissue distribution, detected in kidney cortex (at protein level).

It localises to the apical cell membrane. Its subcellular location is the cell membrane. The protein localises to the endosome membrane. The protein resides in the membrane. It is found in the coated pit. Its function is as follows. Membrane-bound component of the endocytic receptor formed by AMN and CUBN. Required for normal CUBN glycosylation and trafficking to the cell surface. The complex formed by AMN and CUBN is required for efficient absorption of vitamin B12. Required for normal CUBN-mediated protein transport in the kidney. The polypeptide is Protein amnionless (AMN) (Sus scrofa (Pig)).